The primary structure comprises 479 residues: Nucleoside-diphosphatase uda-1 (479 aa).

At 1–7 the chain is on the cytoplasmic side; it reads MLFPAFS. A helical; Signal-anchor for type II membrane protein transmembrane segment spans residues 8-24; it reads ILLISFFSLLSVVTTKT. Residues 25-479 lie on the Lumenal side of the membrane; the sequence is QYWCHGDGVL…VLSYFNIISV (455 aa). Residue Glu-171 is the Proton acceptor of the active site. 2 N-linked (GlcNAc...) asparagine glycosylation sites follow: Asn-300 and Asn-452.

The protein belongs to the GDA1/CD39 NTPase family. Requires Ca(2+) as cofactor. The cofactor is Mg(2+). Mn(2+) serves as cofactor.

It localises to the endomembrane system. It catalyses the reaction a ribonucleoside 5'-diphosphate + H2O = a ribonucleoside 5'-phosphate + phosphate + H(+). Its function is as follows. Hydrolyzes UDP and GDP but not any other nucleoside di-, mono- or triphosphates. May promote reglycosylation reactions involved in glycoproteins folding and quality control in the endoplasmic reticulum. The protein is Nucleoside-diphosphatase uda-1 (uda-1) of Caenorhabditis elegans.